The following is a 427-amino-acid chain: UDP-N-acetylglucosamine--N-acetylmuramyl-(pentapeptide) pyrophosphoryl-undecaprenol N-acetylglucosamine transferase (427 aa).

UDP-N-acetyl-alpha-D-glucosamine-binding positions include 29 to 31 (TGG), Asn141, Arg177, Ser205, Ile258, and Gln303. Positions 408–427 (SLHPIPDSRFPIRTSAGGAQ) are disordered.

The protein belongs to the glycosyltransferase 28 family. MurG subfamily.

Its subcellular location is the cell inner membrane. It carries out the reaction di-trans,octa-cis-undecaprenyl diphospho-N-acetyl-alpha-D-muramoyl-L-alanyl-D-glutamyl-meso-2,6-diaminopimeloyl-D-alanyl-D-alanine + UDP-N-acetyl-alpha-D-glucosamine = di-trans,octa-cis-undecaprenyl diphospho-[N-acetyl-alpha-D-glucosaminyl-(1-&gt;4)]-N-acetyl-alpha-D-muramoyl-L-alanyl-D-glutamyl-meso-2,6-diaminopimeloyl-D-alanyl-D-alanine + UDP + H(+). It functions in the pathway cell wall biogenesis; peptidoglycan biosynthesis. Its function is as follows. Cell wall formation. Catalyzes the transfer of a GlcNAc subunit on undecaprenyl-pyrophosphoryl-MurNAc-pentapeptide (lipid intermediate I) to form undecaprenyl-pyrophosphoryl-MurNAc-(pentapeptide)GlcNAc (lipid intermediate II). The chain is UDP-N-acetylglucosamine--N-acetylmuramyl-(pentapeptide) pyrophosphoryl-undecaprenol N-acetylglucosamine transferase from Xanthomonas campestris pv. campestris (strain B100).